Reading from the N-terminus, the 528-residue chain is O-methylsterigmatocystin oxidoreductase (528 aa).

Cysteine 440 is a binding site for heme.

This sequence belongs to the cytochrome P450 family. Heme serves as cofactor.

The catalysed reaction is 8-O-methylsterigmatocystin + 2 reduced [NADPH--hemoprotein reductase] + 2 O2 = aflatoxin B1 + methanol + 2 oxidized [NADPH--hemoprotein reductase] + CO2 + H2O + 2 H(+). The enzyme catalyses 8-O-methyldihydrosterigmatocystin + 2 reduced [NADPH--hemoprotein reductase] + 2 O2 = aflatoxin B2 + methanol + 2 oxidized [NADPH--hemoprotein reductase] + CO2 + H2O + 2 H(+). Its pathway is mycotoxin biosynthesis; aflatoxin biosynthesis. Functionally, converts O-methylsterigmatocystin (OMST) to aflatoxin B1 and converts dihydro-O-methylsterigmatocystin (DHOMST) to aflatoxin B2 in the aflatoxin biosynthesis pathway. This is O-methylsterigmatocystin oxidoreductase (ordA) from Aspergillus flavus.